Consider the following 176-residue polypeptide: Tubulin polymerization-promoting protein family member 3 (176 aa).

Residue Ala-2 is modified to N-acetylalanine. Positions 132-152 (TGSHKERFDESGKGKGIAGRQ) are disordered. Basic and acidic residues predominate over residues 134-144 (SHKERFDESGK).

Belongs to the TPPP family.

It localises to the cytoplasm. The protein localises to the cytoskeleton. In terms of biological role, regulator of microtubule dynamic that has microtubule bundling activity. Required for embryo implantation; possibly by regulating beta-catenin. Also required for decidualization via regulation of beta-catenin. The sequence is that of Tubulin polymerization-promoting protein family member 3 from Mus musculus (Mouse).